A 129-amino-acid chain; its full sequence is uncharacterized protein (129 aa).

The span at Ser-85–Asp-108 shows a compositional bias: low complexity. A disordered region spans residues Ser-85–Pro-110.

This is an uncharacterized protein from Microplitis demolitor (Parasitoid wasp).